The following is a 166-amino-acid chain: Large ribosomal subunit protein eL14 (166 aa).

Residues 135 to 166 form a disordered region; the sequence is KADGTPRVLKKDRRERLRAEKAKGGKKAAAKK. Residues 146 to 157 show a composition bias toward basic and acidic residues; sequence DRRERLRAEKAK.

The protein belongs to the eukaryotic ribosomal protein eL14 family.

This chain is Large ribosomal subunit protein eL14 (RpL14), found in Drosophila melanogaster (Fruit fly).